We begin with the raw amino-acid sequence, 352 residues long: Probable dual-specificity RNA methyltransferase RlmN (352 aa).

The active-site Proton acceptor is Glu-99. One can recognise a Radical SAM core domain in the interval 105-339 (TKSRTTACVS…VTVRRSRGKD (235 aa)). The cysteines at positions 112 and 344 are disulfide-linked. [4Fe-4S] cluster-binding residues include Cys-119, Cys-123, and Cys-126. S-adenosyl-L-methionine is bound by residues 170–171 (GE), Ser-202, 225–227 (SLH), and Asn-301. Cys-344 acts as the S-methylcysteine intermediate in catalysis.

The protein belongs to the radical SAM superfamily. RlmN family. [4Fe-4S] cluster is required as a cofactor.

It localises to the cytoplasm. It catalyses the reaction adenosine(2503) in 23S rRNA + 2 reduced [2Fe-2S]-[ferredoxin] + 2 S-adenosyl-L-methionine = 2-methyladenosine(2503) in 23S rRNA + 5'-deoxyadenosine + L-methionine + 2 oxidized [2Fe-2S]-[ferredoxin] + S-adenosyl-L-homocysteine. The enzyme catalyses adenosine(37) in tRNA + 2 reduced [2Fe-2S]-[ferredoxin] + 2 S-adenosyl-L-methionine = 2-methyladenosine(37) in tRNA + 5'-deoxyadenosine + L-methionine + 2 oxidized [2Fe-2S]-[ferredoxin] + S-adenosyl-L-homocysteine. Its function is as follows. Specifically methylates position 2 of adenine 2503 in 23S rRNA and position 2 of adenine 37 in tRNAs. This is Probable dual-specificity RNA methyltransferase RlmN from Christiangramia forsetii (strain DSM 17595 / CGMCC 1.15422 / KT0803) (Gramella forsetii).